The primary structure comprises 97 residues: Co-chaperonin GroES (97 aa).

This sequence belongs to the GroES chaperonin family. In terms of assembly, heptamer of 7 subunits arranged in a ring. Interacts with the chaperonin GroEL.

The protein resides in the cytoplasm. Together with the chaperonin GroEL, plays an essential role in assisting protein folding. The GroEL-GroES system forms a nano-cage that allows encapsulation of the non-native substrate proteins and provides a physical environment optimized to promote and accelerate protein folding. GroES binds to the apical surface of the GroEL ring, thereby capping the opening of the GroEL channel. This Wigglesworthia glossinidia brevipalpis protein is Co-chaperonin GroES.